Here is a 137-residue protein sequence, read N- to C-terminus: MADEDDYQDMDNDDFVDDNEMEDVIEEDPQRPDNEDEDDDNVDENFELFDQGKAVPTSEHVTTPFMTKYERARVLGTRALQIAMGAPVMVELEGETDPLEIARKELKQRRIPIIVRRYLPDGSYEDWPTDQLQLADW.

Composition is skewed to acidic residues over residues 1–27 and 34–43; these read MADEDDYQDMDNDDFVDDNEMEDVIEE and NEDEDDDNVD. A disordered region spans residues 1–43; the sequence is MADEDDYQDMDNDDFVDDNEMEDVIEEDPQRPDNEDEDDDNVD.

The protein belongs to the archaeal Rpo6/eukaryotic RPB6 RNA polymerase subunit family. In terms of assembly, component of the RNA polymerase I (Pol I), RNA polymerase II (Pol II) and RNA polymerase III (Pol III) complexes consisting of at least 13, 12 and 17 subunits, respectively.

The protein resides in the nucleus. Functionally, DNA-dependent RNA polymerases catalyze the transcription of DNA into RNA using the four ribonucleoside triphosphates as substrates. Common component of RNA polymerases I, II and III which synthesize ribosomal RNA precursors, mRNA precursors and many functional non-coding RNAs, and small RNAs, such as 5S rRNA and tRNAs, respectively. Pol II is the central component of the basal RNA polymerase II transcription machinery. Pols are composed of mobile elements that move relative to each other. In Pol II, RPB6 is part of the clamp element and together with parts of RPB1 and RPB2 forms a pocket to which the RPB4-RPB7 subcomplex binds. This Caenorhabditis elegans protein is Probable DNA-directed RNA polymerases I, II, and III subunit RPABC2 (rpb-6).